Here is a 240-residue protein sequence, read N- to C-terminus: Short palate, lung and nasal epithelium carcinoma-associated protein 2B (240 aa).

An N-terminal signal peptide occupies residues 1 to 19; it reads MVQLWKLVLLCGLLAGTSA. Cys163 and Cys206 are oxidised to a cystine.

It belongs to the BPI/LBP/Plunc superfamily. Plunc family. As to expression, parotid glands.

The protein localises to the secreted. The chain is Short palate, lung and nasal epithelium carcinoma-associated protein 2B (SPLUNC2B) from Bos taurus (Bovine).